Reading from the N-terminus, the 55-residue chain is Large ribosomal subunit protein bL33 (55 aa).

The protein belongs to the bacterial ribosomal protein bL33 family.

The chain is Large ribosomal subunit protein bL33 from Brucella abortus (strain S19).